Reading from the N-terminus, the 334-residue chain is L-lactate dehydrogenase B chain (334 aa).

Ala-2 bears the N-acetylalanine mark. Position 7 is an N6-acetyllysine (Lys-7). Residues 30-58 (GQVGMACAISILGKSLTDELALVDVLEDK) and Arg-100 contribute to the NAD(+) site. The residue at position 44 (Ser-44) is a Phosphoserine. The residue at position 58 (Lys-58) is an N6-acetyllysine. Arg-107 contacts substrate. Residue Lys-119 is modified to N6-acetyllysine. Asn-139 serves as a coordination point for NAD(+). Substrate contacts are provided by Asn-139 and Arg-170. The active-site Proton acceptor is the His-194. The residue at position 240 (Tyr-240) is a Phosphotyrosine. Thr-249 serves as a coordination point for substrate. Position 329 is an N6-acetyllysine (Lys-329).

It belongs to the LDH/MDH superfamily. LDH family. In terms of assembly, homotetramer. Interacts with PTEN upstream reading frame protein MP31; the interaction leads to inhibition of mitochondrial lactate dehydrogenase activity, preventing conversion of lactate to pyruvate in mitochondria.

It localises to the cytoplasm. Its subcellular location is the mitochondrion inner membrane. It carries out the reaction (S)-lactate + NAD(+) = pyruvate + NADH + H(+). The protein operates within fermentation; pyruvate fermentation to lactate; (S)-lactate from pyruvate: step 1/1. Interconverts simultaneously and stereospecifically pyruvate and lactate with concomitant interconversion of NADH and NAD(+). The chain is L-lactate dehydrogenase B chain (LDHB) from Sus scrofa (Pig).